The chain runs to 795 residues: uncharacterized protein (795 aa).

This is an uncharacterized protein from Methanocaldococcus jannaschii (strain ATCC 43067 / DSM 2661 / JAL-1 / JCM 10045 / NBRC 100440) (Methanococcus jannaschii).